The chain runs to 445 residues: Bifunctional protein GlmU (445 aa).

The interval 1–218 (MRALVLAAGK…LLEITGVNTR (218 aa)) is pyrophosphorylase. Residues 6-9 (LAAG), Lys20, Gln69, 74-75 (GT), 96-98 (YGD), Gly134, Glu147, Asn162, and Asn216 contribute to the UDP-N-acetyl-alpha-D-glucosamine site. Asp98 contacts Mg(2+). Asn216 serves as a coordination point for Mg(2+). The linker stretch occupies residues 219-239 (KTLVWLEEQLRMRKIEELLEN). An N-acetyltransferase region spans residues 240–445 (GVTILDPATT…GWVLKKRKEE (206 aa)). UDP-N-acetyl-alpha-D-glucosamine-binding residues include Arg321 and Lys339. His351 (proton acceptor) is an active-site residue. Residues Tyr354 and Asn365 each contribute to the UDP-N-acetyl-alpha-D-glucosamine site. Residues Ala368, 374–375 (NY), Ser393, Ala411, and Arg428 each bind acetyl-CoA.

This sequence in the N-terminal section; belongs to the N-acetylglucosamine-1-phosphate uridyltransferase family. The protein in the C-terminal section; belongs to the transferase hexapeptide repeat family. Homotrimer. Mg(2+) is required as a cofactor.

The protein localises to the cytoplasm. It carries out the reaction alpha-D-glucosamine 1-phosphate + acetyl-CoA = N-acetyl-alpha-D-glucosamine 1-phosphate + CoA + H(+). It catalyses the reaction N-acetyl-alpha-D-glucosamine 1-phosphate + UTP + H(+) = UDP-N-acetyl-alpha-D-glucosamine + diphosphate. Its pathway is nucleotide-sugar biosynthesis; UDP-N-acetyl-alpha-D-glucosamine biosynthesis; N-acetyl-alpha-D-glucosamine 1-phosphate from alpha-D-glucosamine 6-phosphate (route II): step 2/2. It participates in nucleotide-sugar biosynthesis; UDP-N-acetyl-alpha-D-glucosamine biosynthesis; UDP-N-acetyl-alpha-D-glucosamine from N-acetyl-alpha-D-glucosamine 1-phosphate: step 1/1. It functions in the pathway bacterial outer membrane biogenesis; LPS lipid A biosynthesis. In terms of biological role, catalyzes the last two sequential reactions in the de novo biosynthetic pathway for UDP-N-acetylglucosamine (UDP-GlcNAc). The C-terminal domain catalyzes the transfer of acetyl group from acetyl coenzyme A to glucosamine-1-phosphate (GlcN-1-P) to produce N-acetylglucosamine-1-phosphate (GlcNAc-1-P), which is converted into UDP-GlcNAc by the transfer of uridine 5-monophosphate (from uridine 5-triphosphate), a reaction catalyzed by the N-terminal domain. The polypeptide is Bifunctional protein GlmU (Thermotoga maritima (strain ATCC 43589 / DSM 3109 / JCM 10099 / NBRC 100826 / MSB8)).